The chain runs to 335 residues: Serpentine receptor class gamma-11 (335 aa).

7 helical membrane passes run 33-53 (FLQI…LYTI), 66-86 (FFLI…LDII), 98-118 (PIIA…MIVL), 154-174 (LKYL…NLII), 202-222 (FQLI…SVIF), 242-262 (GTAY…LFAF), and 271-291 (TIFG…PIIM).

The protein belongs to the nematode receptor-like protein srg family.

Its subcellular location is the membrane. This Caenorhabditis elegans protein is Serpentine receptor class gamma-11 (srg-11).